Here is a 169-residue protein sequence, read N- to C-terminus: N-alpha-acetyltransferase 50 (169 aa).

In terms of domain architecture, N-acetyltransferase spans 6–155 (IELGDVTPHN…DAHVLQKNLK (150 aa)). Threonine 12 bears the Phosphothreonine mark. Tyrosine 31 contacts substrate. Residues lysine 34 and lysine 37 each carry the N6-acetyllysine modification. Residue tyrosine 73 is part of the active site. Methionine 75 is a substrate binding site. 77 to 90 (LGCLAPYRRLGIGT) serves as a coordination point for acetyl-CoA. Position 110 is a phosphotyrosine (tyrosine 110). Histidine 112 is an active-site residue. 117–126 (NESAIDFYRK) serves as a coordination point for CoA. The tract at residues 138–141 (YYKR) is substrate. Position 140 is an N6-acetyllysine (lysine 140).

Belongs to the acetyltransferase family. GNAT subfamily. Component of the N-terminal acetyltransferase E (NatE) complex at least composed of NAA10, NAA15 and NAA50. Interacts with NAA10. Interacts with NAA15. Predominantly interacts with NAA15 in the N-terminal acetyltransferase A complex (NatA complex); the interactions reduce the acetylation activity of the NatA complex. Component of the N-terminal acetyltransferase E (NatE)/HYPK complex at least composed of NAA10, NAA15, NAA50 and HYPK. Within the complex interacts with NAA15. Its capacity to interact with the NatA complex is reduced by HYPK. Interacts with NAA35.

The protein localises to the cytoplasm. It is found in the nucleus. It carries out the reaction N-terminal L-methionyl-L-alanyl-[protein] + acetyl-CoA = N-terminal N(alpha)-acetyl-L-methionyl-L-alanyl-[protein] + CoA + H(+). The catalysed reaction is N-terminal L-methionyl-L-seryl-[protein] + acetyl-CoA = N-terminal N(alpha)-acetyl-L-methionyl-L-seryl-[protein] + CoA + H(+). The enzyme catalyses N-terminal L-methionyl-L-valyl-[protein] + acetyl-CoA = N-terminal N(alpha)-acetyl-L-methionyl-L-valyl-[protein] + CoA + H(+). It catalyses the reaction N-terminal L-methionyl-L-threonyl-[protein] + acetyl-CoA = N-terminal N(alpha)-acetyl-L-methionyl-L-threonyl-[protein] + CoA + H(+). It carries out the reaction N-terminal L-methionyl-L-lysyl-[protein] + acetyl-CoA = N-terminal N(alpha)-acetyl-L-methionyl-L-lysyl-[protein] + CoA + H(+). The catalysed reaction is N-terminal L-methionyl-L-leucyl-[protein] + acetyl-CoA = N-terminal N(alpha)-acetyl-L-methionyl-L-leucyl-[protein] + CoA + H(+). The enzyme catalyses N-terminal L-methionyl-L-phenylalanyl-[protein] + acetyl-CoA = N-terminal N(alpha)-acetyl-L-methionyl-L-phenylalanyl-[protein] + CoA + H(+). It catalyses the reaction N-terminal L-methionyl-L-tyrosyl-[protein] + acetyl-CoA = N-terminal N(alpha)-acetyl-L-methionyl-L-tyrosyl-[protein] + CoA + H(+). Its function is as follows. N-alpha-acetyltransferase that acetylates the N-terminus of proteins that retain their initiating methionine. Has a broad substrate specificity: able to acetylate the initiator methionine of most peptides, except for those with a proline in second position. Also displays N-epsilon-acetyltransferase activity by mediating acetylation of the side chain of specific lysines on proteins. Autoacetylates in vivo. The relevance of N-epsilon-acetyltransferase activity is however unclear: able to acetylate H4 in vitro, but this result has not been confirmed in vivo. Component of N-alpha-acetyltransferase complexes containing NAA10 and NAA15, which has N-alpha-acetyltransferase activity. Does not influence the acetyltransferase activity of NAA10. However, it negatively regulates the N-alpha-acetyltransferase activity of the N-terminal acetyltransferase A complex (also called the NatA complex). The multiprotein complexes probably constitute the major contributor for N-terminal acetylation at the ribosome exit tunnel, with NAA10 acetylating all amino termini that are devoid of methionine and NAA50 acetylating other peptides. Required for sister chromatid cohesion during mitosis by promoting binding of CDCA5/sororin to cohesin: may act by counteracting the function of NAA10. In Mus musculus (Mouse), this protein is N-alpha-acetyltransferase 50.